A 291-amino-acid chain; its full sequence is UTP--glucose-1-phosphate uridylyltransferase (291 aa).

This sequence belongs to the UDPGP type 2 family.

It carries out the reaction alpha-D-glucose 1-phosphate + UTP + H(+) = UDP-alpha-D-glucose + diphosphate. In terms of biological role, may play a role in stationary phase survival. In Mycoplasma pneumoniae (strain ATCC 29342 / M129 / Subtype 1) (Mycoplasmoides pneumoniae), this protein is UTP--glucose-1-phosphate uridylyltransferase (galU).